The following is a 130-amino-acid chain: Small ribosomal subunit protein uS8 (130 aa).

This sequence belongs to the universal ribosomal protein uS8 family. As to quaternary structure, part of the 30S ribosomal subunit. Contacts proteins S5 and S12.

One of the primary rRNA binding proteins, it binds directly to 16S rRNA central domain where it helps coordinate assembly of the platform of the 30S subunit. The sequence is that of Small ribosomal subunit protein uS8 from Vibrio atlanticus (strain LGP32) (Vibrio splendidus (strain Mel32)).